Consider the following 757-residue polypeptide: Kin of IRRE-like protein 1 (757 aa).

Positions M1–S16 are cleaved as a signal peptide. The Extracellular segment spans residues Q17 to A499. 5 consecutive Ig-like C2-type domains span residues T21–T115, P120–E216, P223–S299, P308–L387, and P392–E488. C42 and C100 are oxidised to a cystine. Residues N46 and N140 are each glycosylated (N-linked (GlcNAc...) asparagine). 2 cysteine pairs are disulfide-bonded: C143-C200 and C244-C287. The N-linked (GlcNAc...) asparagine glycan is linked to N297. An intrachain disulfide couples C329 to C371. Positions R405–D407 match the Cell attachment site motif. The cysteines at positions 413 and 472 are disulfide-linked. N471 is a glycosylation site (N-linked (GlcNAc...) asparagine). Residues G500–L520 traverse the membrane as a helical segment. Residues Y521–V757 lie on the Cytoplasmic side of the membrane. S574 is modified (phosphoserine). Phosphotyrosine; by FYN occurs at positions 605 and 606. 2 positions are modified to phosphotyrosine: Y622 and Y625. Residues Q649–T679 form a disordered region. Y724 is subject to Phosphotyrosine.

Belongs to the immunoglobulin superfamily. In terms of assembly, interacts with TJP1/ZO-1 and with NPHS2/podocin (via the C-terminus). Interacts with NPHS1/nephrin (via the Ig-like domains); this interaction is dependent on KIRREL1 glycosylation. Homodimer (via the Ig-like domains). Interacts when tyrosine-phosphorylated with GRB2. Phosphorylation probably regulates the interaction with NSH2. Phosphorylated at Tyr-605 and Tyr-606 by FYN, leading to GRB2 binding. In terms of processing, N-glycosylated. In terms of tissue distribution, abundantly expressed in kidney. Specifically expressed in podocytes of kidney glomeruli.

The protein localises to the cell membrane. Required for proper function of the glomerular filtration barrier. It is involved in the maintenance of a stable podocyte architecture with interdigitating foot processes connected by specialized cell-cell junctions, known as the slit diaphragm. It is a signaling protein that needs the presence of TEC kinases to fully trans-activate the transcription factor AP-1. In Homo sapiens (Human), this protein is Kin of IRRE-like protein 1.